Consider the following 45-residue polypeptide: Large ribosomal subunit protein bL34 (45 aa).

It belongs to the bacterial ribosomal protein bL34 family.

The polypeptide is Large ribosomal subunit protein bL34 (Beutenbergia cavernae (strain ATCC BAA-8 / DSM 12333 / CCUG 43141 / JCM 11478 / NBRC 16432 / NCIMB 13614 / HKI 0122)).